The chain runs to 84 residues: MIFQKIQEFIAEQLSIDKNNIKLESDLKEDLGIDSIDAVGLIIKIEEFFKLEVSDETLQKFKNVKDILEYIQQHVDNYDYLEKK.

The 75-residue stretch at methionine 1–valine 75 folds into the Carrier domain. Residue serine 35 is modified to O-(pantetheine 4'-phosphoryl)serine.

This sequence belongs to the acyl carrier protein (ACP) family. Post-translationally, 4'-phosphopantetheine is transferred from CoA to a specific serine of apo-ACP by AcpS. This modification is essential for activity because fatty acids are bound in thioester linkage to the sulfhydryl of the prosthetic group.

It is found in the cytoplasm. Its pathway is lipid metabolism; fatty acid biosynthesis. Carrier of the growing fatty acid chain in fatty acid biosynthesis. This Phytoplasma mali (strain AT) protein is Acyl carrier protein.